The sequence spans 187 residues: Large ribosomal subunit protein uL22 (187 aa).

Basic and acidic residues-rich tracts occupy residues 158–168 (TKATDESEQAK) and 178–187 (RQKEKMMRNE). The interval 158 to 187 (TKATDESEQAKKKLSKKKLQRQKEKMMRNE) is disordered.

This sequence belongs to the universal ribosomal protein uL22 family.

The chain is Large ribosomal subunit protein uL22 (RpL17) from Anopheles gambiae (African malaria mosquito).